We begin with the raw amino-acid sequence, 262 residues long: 5'-nucleotidase SurE (262 aa).

4 residues coordinate a divalent metal cation: aspartate 9, aspartate 10, serine 40, and asparagine 95.

It belongs to the SurE nucleotidase family. It depends on a divalent metal cation as a cofactor.

Its subcellular location is the cytoplasm. The enzyme catalyses a ribonucleoside 5'-phosphate + H2O = a ribonucleoside + phosphate. Its function is as follows. Nucleotidase that shows phosphatase activity on nucleoside 5'-monophosphates. The sequence is that of 5'-nucleotidase SurE from Aliarcobacter butzleri (strain RM4018) (Arcobacter butzleri).